Here is a 215-residue protein sequence, read N- to C-terminus: LexA repressor (215 aa).

The H-T-H motif DNA-binding region spans 28-48; sequence RAEIAAELGFSSPNAAEEHLR. Residues serine 133 and lysine 170 each act as for autocatalytic cleavage activity in the active site.

Belongs to the peptidase S24 family. As to quaternary structure, homodimer.

It catalyses the reaction Hydrolysis of Ala-|-Gly bond in repressor LexA.. In terms of biological role, represses a number of genes involved in the response to DNA damage (SOS response), including recA and lexA. In the presence of single-stranded DNA, RecA interacts with LexA causing an autocatalytic cleavage which disrupts the DNA-binding part of LexA, leading to derepression of the SOS regulon and eventually DNA repair. The polypeptide is LexA repressor (Burkholderia ambifaria (strain MC40-6)).